A 303-amino-acid chain; its full sequence is Major fimbrium anchoring subunit FimB (303 aa).

The signal sequence occupies residues 1 to 22; sequence MNDAKKYIVSVLILLVAGMFGG. Cysteine 23 carries N-palmitoyl cysteine lipidation. Cysteine 23 carries the S-diacylglycerol cysteine lipid modification.

This sequence belongs to the bacteroidetes fimbrillin superfamily. FimB/Mfa2 family. As to quaternary structure, fimB is not part of the fimbrium itself, but anchors the fimbrium in the outer membrane. Linear, head-to-tail oligomerization of fimbrial subunits mediates assembly of the fimbrium stalk, while the minor components FimC, FimD and FimE probably form the fimbrium tip. The anchoring subunit FimB limits fimbrium length and is important for solid fimbrium attachment to the outer membrane. In its absence, the major fimbriae become very long and are easily detached from the membrane.

Its subcellular location is the cell outer membrane. Anchoring subunit of the major fimbriae. Regulates fimbrial length. These filamentous pili are attached to the cell surface; they mediate biofilm formation, adhesion onto host cells and onto other bacteria that are part of the oral microbiome. Fimbriae of P.gingivalis are major virulence factors. The protein is Major fimbrium anchoring subunit FimB of Porphyromonas gingivalis (strain ATCC BAA-308 / W83).